A 167-amino-acid polypeptide reads, in one-letter code: Secretion monitor (167 aa).

Residues 1–36 (MIGILNRWRQFGRRYFWPHLLLGMVAASFGLPQASA) form the signal peptide.

This sequence belongs to the SecM family.

It is found in the cytoplasm. The protein resides in the cytosol. The protein localises to the periplasm. Its function is as follows. Regulates secA expression by translational coupling of the secM secA operon. Translational pausing at a specific Pro residue 5 residues before the end of the protein may allow disruption of a mRNA repressor helix that normally suppresses secA translation initiation. This is Secretion monitor from Erwinia tasmaniensis (strain DSM 17950 / CFBP 7177 / CIP 109463 / NCPPB 4357 / Et1/99).